The chain runs to 306 residues: Agmatinase (306 aa).

Residues His126, Asp149, His151, Asp153, Asp230, and Asp232 each contribute to the Mn(2+) site.

The protein belongs to the arginase family. Agmatinase subfamily. Requires Mn(2+) as cofactor.

The enzyme catalyses agmatine + H2O = urea + putrescine. Its pathway is amine and polyamine biosynthesis; putrescine biosynthesis via agmatine pathway; putrescine from agmatine: step 1/1. Catalyzes the formation of putrescine from agmatine. The sequence is that of Agmatinase from Shigella sonnei (strain Ss046).